Here is a 399-residue protein sequence, read N- to C-terminus: Probable dual-specificity RNA methyltransferase RlmN (399 aa).

The Proton acceptor role is filled by Glu102. Residues 108-385 (YLDRATVCVS…CTVRVERGVA (278 aa)) form the Radical SAM core domain. Cysteines 115 and 390 form a disulfide. [4Fe-4S] cluster contacts are provided by Cys122, Cys126, and Cys129. Residues 207–208 (GE), Ser239, 262–264 (SLH), and Asn347 each bind S-adenosyl-L-methionine. Cys390 functions as the S-methylcysteine intermediate in the catalytic mechanism.

The protein belongs to the radical SAM superfamily. RlmN family. The cofactor is [4Fe-4S] cluster.

It is found in the cytoplasm. It catalyses the reaction adenosine(2503) in 23S rRNA + 2 reduced [2Fe-2S]-[ferredoxin] + 2 S-adenosyl-L-methionine = 2-methyladenosine(2503) in 23S rRNA + 5'-deoxyadenosine + L-methionine + 2 oxidized [2Fe-2S]-[ferredoxin] + S-adenosyl-L-homocysteine. It carries out the reaction adenosine(37) in tRNA + 2 reduced [2Fe-2S]-[ferredoxin] + 2 S-adenosyl-L-methionine = 2-methyladenosine(37) in tRNA + 5'-deoxyadenosine + L-methionine + 2 oxidized [2Fe-2S]-[ferredoxin] + S-adenosyl-L-homocysteine. Specifically methylates position 2 of adenine 2503 in 23S rRNA and position 2 of adenine 37 in tRNAs. The polypeptide is Probable dual-specificity RNA methyltransferase RlmN (Roseiflexus castenholzii (strain DSM 13941 / HLO8)).